The following is a 184-amino-acid chain: Photosystem I assembly protein Ycf4 (184 aa).

A run of 2 helical transmembrane segments spans residues 22–42 (FCWAFILFLGSLGFLLVGTSS) and 57–77 (IIFFPQGIVMSFYGIAGLFIS).

The protein belongs to the Ycf4 family.

The protein resides in the plastid. It is found in the chloroplast thylakoid membrane. In terms of biological role, seems to be required for the assembly of the photosystem I complex. The sequence is that of Photosystem I assembly protein Ycf4 from Lepidium virginicum (Virginia pepperweed).